We begin with the raw amino-acid sequence, 592 residues long: Condensin-2 complex subunit H2 (592 aa).

Disordered regions lie at residues 89–116 (NKKR…DGCE) and 261–285 (EAPS…PKQL). A compositionally biased stretch (polar residues) spans 96–108 (GSSSDGNQEQAPS).

It belongs to the CND2 H2 (condensin-2 subunit 2) family. In terms of assembly, component of the condensin-2 complex, which contains the smc2 and smc4 heterodimer, and three non SMC subunits, ncapg2, ncaph2 and ncapd3 that probably regulate the complex.

The protein resides in the nucleus. In terms of biological role, regulatory subunit of the condensin-2 complex, a complex that seems to provide chromosomes with an additional level of organization and rigidity and in establishing mitotic chromosome architecture. The protein is Condensin-2 complex subunit H2 (ncaph2) of Danio rerio (Zebrafish).